Consider the following 486-residue polypeptide: Ribulose bisphosphate carboxylase large chain 1 (486 aa).

Positions 125 and 175 each coordinate substrate. Catalysis depends on K177, which acts as the Proton acceptor. K179 lines the substrate pocket. Mg(2+)-binding residues include K203, D205, and E206. Position 203 is an N6-carboxylysine (K203). H295 functions as the Proton acceptor in the catalytic mechanism. R296, H328, and S380 together coordinate substrate.

This sequence belongs to the RuBisCO large chain family. Type I subfamily. In terms of assembly, heterohexadecamer of 8 large chains and 8 small chains. Mg(2+) serves as cofactor.

The enzyme catalyses 2 (2R)-3-phosphoglycerate + 2 H(+) = D-ribulose 1,5-bisphosphate + CO2 + H2O. The catalysed reaction is D-ribulose 1,5-bisphosphate + O2 = 2-phosphoglycolate + (2R)-3-phosphoglycerate + 2 H(+). In terms of biological role, ruBisCO catalyzes two reactions: the carboxylation of D-ribulose 1,5-bisphosphate, the primary event in carbon dioxide fixation, as well as the oxidative fragmentation of the pentose substrate. Both reactions occur simultaneously and in competition at the same active site. This is Ribulose bisphosphate carboxylase large chain 1 from Cereibacter sphaeroides (strain ATCC 17025 / ATH 2.4.3) (Rhodobacter sphaeroides).